The primary structure comprises 524 residues: Cytochrome P450 4F12 (524 aa).

2 consecutive transmembrane segments (helical) span residues Trp-19 to Tyr-39 and Gly-87 to Ile-107. Cys-468 contributes to the heme binding site.

Belongs to the cytochrome P450 family. It depends on heme as a cofactor. As to expression, expressed in small intestine, liver, colon and heart.

Its subcellular location is the endoplasmic reticulum membrane. The protein resides in the microsome membrane. The enzyme catalyses an organic molecule + reduced [NADPH--hemoprotein reductase] + O2 = an alcohol + oxidized [NADPH--hemoprotein reductase] + H2O + H(+). It carries out the reaction (5Z,8Z,11Z,14Z)-eicosatetraenoate + reduced [NADPH--hemoprotein reductase] + O2 = 18-hydroxy-(5Z,8Z,11Z,14Z)-eicosatetraenoate + oxidized [NADPH--hemoprotein reductase] + H2O + H(+). It catalyses the reaction (7Z,10Z,13Z,16Z,19Z)-docosapentaenoate + reduced [NADPH--hemoprotein reductase] + O2 = 10,11-epoxy-(7Z,13Z,16Z,19Z)-docosatetraenoate + oxidized [NADPH--hemoprotein reductase] + H2O + H(+). The catalysed reaction is (7Z,10Z,13Z,16Z,19Z)-docosapentaenoate + reduced [NADPH--hemoprotein reductase] + O2 = 13,14-epoxy-(7Z,10Z,16Z,19Z)-docosatetraenoate + oxidized [NADPH--hemoprotein reductase] + H2O + H(+). The enzyme catalyses (7Z,10Z,13Z,16Z,19Z)-docosapentaenoate + reduced [NADPH--hemoprotein reductase] + O2 = 16,17-epoxy-(7Z,10Z,13Z,19Z)-docosatetraenoate + oxidized [NADPH--hemoprotein reductase] + H2O + H(+). It carries out the reaction (7Z,10Z,13Z,16Z,19Z)-docosapentaenoate + reduced [NADPH--hemoprotein reductase] + O2 = 19,20-epoxy-(7Z,10Z,13Z,16Z)-docosatetraenoate + oxidized [NADPH--hemoprotein reductase] + H2O + H(+). It catalyses the reaction (4Z,7Z,10Z,13Z,16Z,19Z)-docosahexaenoate + reduced [NADPH--hemoprotein reductase] + O2 = 10,11-epoxy-(4Z,7Z,13Z,16Z,19Z)-docosapentaenoate + oxidized [NADPH--hemoprotein reductase] + H2O + H(+). The catalysed reaction is (4Z,7Z,10Z,13Z,16Z,19Z)-docosahexaenoate + reduced [NADPH--hemoprotein reductase] + O2 = 13,14-epoxy-(4Z,7Z,10Z,16Z,19Z)-docosapentaenoate + oxidized [NADPH--hemoprotein reductase] + H2O + H(+). The enzyme catalyses (4Z,7Z,10Z,13Z,16Z,19Z)-docosahexaenoate + reduced [NADPH--hemoprotein reductase] + O2 = 16,17-epoxy-(4Z,7Z,10Z,13Z,19Z)-docosapentaenoate + oxidized [NADPH--hemoprotein reductase] + H2O + H(+). It carries out the reaction (4Z,7Z,10Z,13Z,16Z,19Z)-docosahexaenoate + reduced [NADPH--hemoprotein reductase] + O2 = 19,20-epoxy-(4Z,7Z,10Z,13Z,16Z)-docosapentaenoate + oxidized [NADPH--hemoprotein reductase] + H2O + H(+). It participates in lipid metabolism; arachidonate metabolism. Its function is as follows. A cytochrome P450 monooxygenase involved in the metabolism of endogenous polyunsaturated fatty acids (PUFAs). Mechanistically, uses molecular oxygen inserting one oxygen atom into a substrate, and reducing the second into a water molecule, with two electrons provided by NADPH via cytochrome P450 reductase (CPR; NADPH-ferrihemoprotein reductase). Catalyzes the hydroxylation of carbon hydrogen bonds, with preference for omega-2 position. Metabolizes (5Z,8Z,11Z,14Z)-eicosatetraenoic acid (arachidonate) toward 18-hydroxy arachidonate. Catalyzes the epoxidation of double bonds of PUFAs such as docosapentaenoic and docosahexaenoic acids. Has low omega-hydroxylase activity toward leukotriene B4 and arachidonate. Involved in the metabolism of xenobiotics. Catalyzes the hydroxylation of the antihistamine drug ebastine. The sequence is that of Cytochrome P450 4F12 from Homo sapiens (Human).